The primary structure comprises 101 residues: Large ribosomal subunit protein uL24 (101 aa).

This sequence belongs to the universal ribosomal protein uL24 family. In terms of assembly, part of the 50S ribosomal subunit.

Its function is as follows. One of two assembly initiator proteins, it binds directly to the 5'-end of the 23S rRNA, where it nucleates assembly of the 50S subunit. Functionally, one of the proteins that surrounds the polypeptide exit tunnel on the outside of the subunit. This Jannaschia sp. (strain CCS1) protein is Large ribosomal subunit protein uL24.